The following is an 81-amino-acid chain: Apolipoprotein C-I, acidic form (81 aa).

The first 24 residues, 1 to 24, serve as a signal peptide directing secretion; that stretch reads MRLFLSLLVVVLSIVLEGPTPAQG.

This sequence belongs to the apolipoprotein C1 family.

Its subcellular location is the secreted. This chain is Apolipoprotein C-I, acidic form (APOC1A), found in Theropithecus gelada (Gelada baboon).